A 507-amino-acid chain; its full sequence is 3-octaprenyl-4-hydroxybenzoate carboxy-lyase (507 aa).

Asparagine 177 is a Mn(2+) binding site. Prenylated FMN-binding positions include 180 to 182 (IYR), 194 to 196 (RWL), and 199 to 200 (RG). Residue glutamate 243 coordinates Mn(2+). Catalysis depends on aspartate 302, which acts as the Proton donor.

This sequence belongs to the UbiD family. As to quaternary structure, homohexamer. Requires prenylated FMN as cofactor. Mn(2+) serves as cofactor.

It localises to the cell membrane. It catalyses the reaction a 4-hydroxy-3-(all-trans-polyprenyl)benzoate + H(+) = a 2-(all-trans-polyprenyl)phenol + CO2. The protein operates within cofactor biosynthesis; ubiquinone biosynthesis. In terms of biological role, catalyzes the decarboxylation of 3-octaprenyl-4-hydroxy benzoate to 2-octaprenylphenol, an intermediate step in ubiquinone biosynthesis. The sequence is that of 3-octaprenyl-4-hydroxybenzoate carboxy-lyase from Cupriavidus metallidurans (strain ATCC 43123 / DSM 2839 / NBRC 102507 / CH34) (Ralstonia metallidurans).